Consider the following 663-residue polypeptide: UvrABC system protein B (663 aa).

Residues 30–417 (DGIKAGKRHQ…TDKMVEQIIR (388 aa)) form the Helicase ATP-binding domain. 43–50 (GATGTGKT) contributes to the ATP binding site. Positions 96-119 (YYDYYQPEAYVPSTDTFIEKDASI) match the Beta-hairpin motif. Positions 434-600 (QIDDLLSEIQ…TINKKIHDLI (167 aa)) constitute a Helicase C-terminal domain. In terms of domain architecture, UVR spans 627–662 (QKTIDNIEKEMKQAAKDLDFEKATELRDMLFELKAE).

Belongs to the UvrB family. In terms of assembly, forms a heterotetramer with UvrA during the search for lesions. Interacts with UvrC in an incision complex.

The protein resides in the cytoplasm. In terms of biological role, the UvrABC repair system catalyzes the recognition and processing of DNA lesions. A damage recognition complex composed of 2 UvrA and 2 UvrB subunits scans DNA for abnormalities. Upon binding of the UvrA(2)B(2) complex to a putative damaged site, the DNA wraps around one UvrB monomer. DNA wrap is dependent on ATP binding by UvrB and probably causes local melting of the DNA helix, facilitating insertion of UvrB beta-hairpin between the DNA strands. Then UvrB probes one DNA strand for the presence of a lesion. If a lesion is found the UvrA subunits dissociate and the UvrB-DNA preincision complex is formed. This complex is subsequently bound by UvrC and the second UvrB is released. If no lesion is found, the DNA wraps around the other UvrB subunit that will check the other stand for damage. In Staphylococcus aureus (strain Mu50 / ATCC 700699), this protein is UvrABC system protein B.